A 305-amino-acid chain; its full sequence is MMEGNVQEELELEKSVRRFREKFHGKVALETAVVLMRRFANNHNQVCTYVILYMDNDTDLDVRNHLRNDQVAMNVINKIKRDDQRAKEMPKDKDIQDLAKKMNTLPLTQKNLKMFNDAAENRIPARDRQFACKECDYMWWRRVPQRKEVSRCQRCRKKFDPVPDNKMWGIGEYNCQSCKRMFRGYGQIEVSSPCYMCSKPVSPSCILPPRRNQGPRTRNTHSCFAEYCYNRKEPFVPGLQCAHPKSRILNQLPKVLHPSEWHISTGSTIATCLSQGSLNENDIDDIILDDIKEEEDDEETDDSDS.

The Nuclear localization signal signature appears at 141-157; that stretch reads RRVPQRKEVSRCQRCRK. Residues 279-288 carry the Nuclear export signal motif; that stretch reads NENDIDDIIL.

It belongs to the SHFL family.

It localises to the cytoplasm. The protein resides in the nucleus. Its subcellular location is the P-body. Inhibits programmed -1 ribosomal frameshifting (-1PRF) of a variety of mRNAs from viruses and cellular genes. Interacts with the -1PRF signal of target mRNA and translating ribosomes and causes premature translation termination at the frameshifting site. May exhibit antiviral activity. This chain is Shiftless antiviral inhibitor of ribosomal frameshifting protein homolog (shfl), found in Xenopus laevis (African clawed frog).